The primary structure comprises 131 residues: Histone H2A.1 (131 aa).

Residue S2 is modified to N-acetylserine. 2 positions are modified to N6-acetyllysine: K5 and K8. The residue at position 106 (Q106) is an N5-methylglutamine. A Phosphoserine modification is found at S128. Positions 128–129 (SQ) match the [ST]-Q motif motif.

The protein belongs to the histone H2A family. In terms of assembly, the nucleosome is a histone octamer containing two molecules each of H2A, H2B, H3 and H4 assembled in one H3-H4 heterotetramer and two H2A-H2B heterodimers. The octamer wraps approximately 147 bp of DNA. Post-translationally, phosphorylated to form H2AS128ph (gamma-H2A) in response to DNA double-strand breaks (DSBs) generated by exogenous genotoxic agents and by stalled replication forks. Phosphorylation is dependent on the DNA damage checkpoint kinases MEC1/ATR and TEL1/ATM, spreads on either side of a detected DSB site and may mark the surrounding chromatin for recruitment of proteins required for DNA damage signaling and repair. Gamma-H2A is removed from the DNA prior to the strand invasion-primer extension step of the repair process and subsequently dephosphorylated by PPH3, a component of the histone H2A phosphatase complex (HTP-C). Dephosphorylation is necessary for efficient recovery from the DNA damage checkpoint. Acetylated by ESA1 to form H2AK4ac and H2AK7ac.

The protein resides in the nucleus. It is found in the chromosome. Its function is as follows. Core component of nucleosome which plays a central role in DNA double strand break (DSB) repair. Nucleosomes wrap and compact DNA into chromatin, limiting DNA accessibility to the cellular machineries which require DNA as a template. Histones thereby play a central role in transcription regulation, DNA repair, DNA replication and chromosomal stability. DNA accessibility is regulated via a complex set of post-translational modifications of histones, also called histone code, and nucleosome remodeling. The polypeptide is Histone H2A.1 (HTA1) (Candida glabrata (strain ATCC 2001 / BCRC 20586 / JCM 3761 / NBRC 0622 / NRRL Y-65 / CBS 138) (Yeast)).